The following is a 468-amino-acid chain: Hydroxymethylglutaryl-CoA lyase, mitochondrial (468 aa).

The 268-residue stretch at 168–435 (VKIVEVGPRD…HTNVDLGKLI (268 aa)) folds into the Pyruvate carboxyltransferase domain. A substrate-binding site is contributed by Arg-176. A divalent metal cation is bound by residues Asp-177, His-368, and His-370. Cys-401 is a catalytic residue. Asn-410 is a binding site for a divalent metal cation.

This sequence belongs to the HMG-CoA lyase family. As to quaternary structure, homodimer. A divalent metal cation is required as a cofactor.

The protein localises to the mitochondrion matrix. It catalyses the reaction (3S)-3-hydroxy-3-methylglutaryl-CoA = acetoacetate + acetyl-CoA. It functions in the pathway metabolic intermediate metabolism; (S)-3-hydroxy-3-methylglutaryl-CoA degradation; acetoacetate from (S)-3-hydroxy-3-methylglutaryl-CoA: step 1/1. In terms of biological role, involved in the catabolism of branched amino acids such as leucine. This is Hydroxymethylglutaryl-CoA lyase, mitochondrial (HMGCL) from Arabidopsis thaliana (Mouse-ear cress).